Reading from the N-terminus, the 772-residue chain is MKLTHNFSFLLLLLLVHMSSKHILASKDSSSYVVYFGAHSHVGEITEDAMDRVKETHYDFLGSFTGSRERATDAIFYSYTKHINGFAAHLDHDLAYEISKHPEVVSVFPNKALKLHTTRSWDFLGLEHNSYVPSSSIWRKARFGEDTIIANLDTGVWPESKSFRDEGLGPIPSRWKGICQNQKDATFHCNRKLIGARYFNKGYAAAVGHLNSSFDSPRDLDGHGSHTLSTAAGDFVPGVSIFGQGNGTAKGGSPRARVAAYKVCWPPVKGNECYDADVLAAFDAAIHDGADVISVSLGGEPTSFFNDSVAIGSFHAAKKRIVVVCSAGNSGPADSTVSNVAPWQITVGASTMDREFASNLVLGNGKHYKGQSLSSTALPHAKFYPIMASVNAKAKNASALDAQLCKLGSLDPIKTKGKILVCLRGQNGRVEKGRAVALGGGIGMVLENTYVTGNDLLADPHVLPATQLTSKDSFAVSRYISQTKKPIAHITPSRTDLGLKPAPVMASFSSKGPSIVAPQILKPDITAPGVSVIAAYTGAVSPTNEQFDPRRLLFNAISGTSMSCPHISGIAGLLKTRYPSWSPAAIRSAIMTTATIMDDIPGPIQNATNMKATPFSFGAGHVQPNLAVNPGLVYDLGIKDYLNFLCSLGYNASQISVFSGNNFTCSSPKISLVNLNYPSITVPNLTSSKVTVSRTVKNVGRPSMYTVKVNNPQGVYVAVKPTSLNFTKVGEQKTFKVILVKSKGNVAKGYVFGELVWSDKKHRVRSPIVVKL.

Positions 1 to 25 are cleaved as a signal peptide; sequence MKLTHNFSFLLLLLLVHMSSKHILA. Residues 31 to 116 form the Inhibitor I9 domain; that stretch reads SYVVYFGAHS…VFPNKALKLH (86 aa). One can recognise a Peptidase S8 domain in the interval 120–628; that stretch reads SWDFLGLEHN…AGHVQPNLAV (509 aa). Asp153 acts as the Charge relay system in catalysis. Asn211 carries N-linked (GlcNAc...) asparagine glycosylation. His223 serves as the catalytic Charge relay system. N-linked (GlcNAc...) asparagine glycans are attached at residues Asn246, Asn306, and Asn396. Residues 398-480 enclose the PA domain; it reads SALDAQLCKL…KDSFAVSRYI (83 aa). Ser561 serves as the catalytic Charge relay system. Residues Asn606, Asn651, Asn662, Asn684, and Asn725 are each glycosylated (N-linked (GlcNAc...) asparagine).

Belongs to the peptidase S8 family. Expressed specifically at sites of lateral root emergence.

The protein resides in the secreted. Its subcellular location is the cell wall. In terms of biological role, serine protease. Has a substrate preference for the hydrophobic residues Phe and Ala and the basic residue Asp in the P1 position, and for Asp, Leu or Ala in the P1' position. May play a role in the degradation of structural proteins in the extracellular matrix of cells located above sites of lateral root formation and thus facilitate lateral root emergence. The sequence is that of Subtilisin-like protease SBT5.3 (AIR3) from Arabidopsis thaliana (Mouse-ear cress).